Consider the following 88-residue polypeptide: Putative carnobacteriocin-BM1 immunity protein (88 aa).

Its function is as follows. Could impart immunity to carnobacteriocin-BM1 to naturally sensitive host strains. This Carnobacterium maltaromaticum (Carnobacterium piscicola) protein is Putative carnobacteriocin-BM1 immunity protein.